Reading from the N-terminus, the 204-residue chain is Ancillary SecYEG translocon subunit (204 aa).

Topologically, residues 1–23 (MAYSIEEEQEINQLKDWWKENGK) are cytoplasmic. The helical transmembrane segment at 24–42 (TIIVAFILGVGGMFGWRYW) threads the bilayer. Residues 43-204 (QTHQAEQIAQ…QMAKMKLNNL (162 aa)) lie on the Periplasmic side of the membrane.

Belongs to the YfgM family. As to quaternary structure, interacts with the SecYEG translocon. Forms a complex with PpiD.

The protein resides in the cell inner membrane. May mediate protein transfer from the SecYEG translocon to the periplasmic chaperone network via its periplasmic C-terminal region. This chain is Ancillary SecYEG translocon subunit, found in Haemophilus influenzae (strain ATCC 51907 / DSM 11121 / KW20 / Rd).